The primary structure comprises 449 residues: GTP-binding protein A (449 aa).

The disordered stretch occupies residues 1 to 77 (MFNINPYKSK…LSSKTENSLS (77 aa)). Composition is skewed to low complexity over residues 8–46 (KSKT…SSSS) and 67–77 (SLSSKTENSLS). An AIG1-type G domain is found at 149–386 (QNECNVLLLG…FMGHLRAKNK (238 aa)). Residues 158 to 165 (GRTGVGKS) form a G1 region. Residue 158–165 (GRTGVGKS) participates in GTP binding. The segment at 183 to 187 (SCTQD) is G2. The tract at residues 204–207 (DTPG) is G3. The interval 275-278 (TYAN) is G4. The interval 336-338 (ENS) is G5.

This sequence belongs to the TRAFAC class TrmE-Era-EngA-EngB-Septin-like GTPase superfamily. AIG1/Toc34/Toc159-like paraseptin GTPase family. IAN subfamily.

The chain is GTP-binding protein A (gtpA) from Dictyostelium discoideum (Social amoeba).